The chain runs to 141 residues: Lutropin subunit beta (141 aa).

The first 20 residues, 1–20 (MEMLQGLLLWLLLSVAGVWA), serve as a signal peptide directing secretion. Position 21 is a blocked amino end (Ser) (Ser-21). Disulfide bonds link Cys-29/Cys-77, Cys-43/Cys-92, Cys-46/Cys-130, Cys-54/Cys-108, Cys-58/Cys-110, and Cys-113/Cys-120. An N-linked (GlcNAc...) asparagine glycan is attached at Asn-33.

The protein belongs to the glycoprotein hormones subunit beta family. Heterodimer of a common alpha chain and a unique beta chain which confers biological specificity to thyrotropin, lutropin, follitropin and gonadotropin.

It is found in the secreted. Its function is as follows. Promotes spermatogenesis and ovulation by stimulating the testes and ovaries to synthesize steroids. The protein is Lutropin subunit beta (LHB) of Sus scrofa (Pig).